Consider the following 517-residue polypeptide: Bifunctional purine biosynthesis protein PurH (517 aa).

The 146-residue stretch at methionine 1–cysteine 146 folds into the MGS-like domain.

Belongs to the PurH family.

It catalyses the reaction (6R)-10-formyltetrahydrofolate + 5-amino-1-(5-phospho-beta-D-ribosyl)imidazole-4-carboxamide = 5-formamido-1-(5-phospho-D-ribosyl)imidazole-4-carboxamide + (6S)-5,6,7,8-tetrahydrofolate. The enzyme catalyses IMP + H2O = 5-formamido-1-(5-phospho-D-ribosyl)imidazole-4-carboxamide. It functions in the pathway purine metabolism; IMP biosynthesis via de novo pathway; 5-formamido-1-(5-phospho-D-ribosyl)imidazole-4-carboxamide from 5-amino-1-(5-phospho-D-ribosyl)imidazole-4-carboxamide (10-formyl THF route): step 1/1. The protein operates within purine metabolism; IMP biosynthesis via de novo pathway; IMP from 5-formamido-1-(5-phospho-D-ribosyl)imidazole-4-carboxamide: step 1/1. In Gloeothece citriformis (strain PCC 7424) (Cyanothece sp. (strain PCC 7424)), this protein is Bifunctional purine biosynthesis protein PurH.